Reading from the N-terminus, the 563-residue chain is Protein NOXP20 (563 aa).

The disordered stretch occupies residues 1–84 (MSDDAGDTLA…ANALEPPLNG (84 aa)). Residues 56–68 (AAVQGAGAAAIGP) are compositionally biased toward low complexity. Residue Ser-120 is modified to Phosphoserine. The tract at residues 165-206 (VNSGSSEGAQPNTENGVPEITDAATDQGPAESPPTSPSSASR) is disordered. Over residues 166-179 (NSGSSEGAQPNTEN) the composition is skewed to polar residues. Residues Thr-185 and Thr-189 each carry the phosphothreonine modification. Ser-196 is modified (phosphoserine). Position 199 is a phosphothreonine (Thr-199). 2 positions are modified to phosphoserine: Ser-202 and Ser-261. Positions 343 to 367 (AAKELENEENQEEQGLEEKGEEFAR) form a coiled coil. The segment at 411-436 (SEEETKKEEKEEKSQDPQEDKKEEKK) is disordered.

This sequence belongs to the FAM114 family.

The protein resides in the cytoplasm. Its function is as follows. May play a role in neuronal cell development. This is Protein NOXP20 (FAM114A1) from Homo sapiens (Human).